A 514-amino-acid polypeptide reads, in one-letter code: Na(+)/H(+) antiporter NhaB (514 aa).

The next 12 membrane-spanning stretches (helical) occupy residues 23–43 (LALL…SFVA), 52–72 (IFTL…LLAI), 97–117 (LLLM…LFIF), 120–140 (LLLS…AAAF), 144–164 (FLDA…FYGI), 202–222 (LMMH…VGEP), 238–258 (FFLR…LTCM), 303–323 (AIIG…VGLI), 357–377 (LTVF…APII), 391–411 (LFYL…VGTI), 447–467 (ATPN…APLI), and 475–495 (VWMA…CVEF).

It belongs to the NhaB Na(+)/H(+) (TC 2.A.34) antiporter family.

Its subcellular location is the cell inner membrane. The catalysed reaction is 2 Na(+)(in) + 3 H(+)(out) = 2 Na(+)(out) + 3 H(+)(in). Functionally, na(+)/H(+) antiporter that extrudes sodium in exchange for external protons. The chain is Na(+)/H(+) antiporter NhaB from Salmonella arizonae (strain ATCC BAA-731 / CDC346-86 / RSK2980).